The sequence spans 146 residues: UPF0178 protein R01393 (146 aa).

Belongs to the UPF0178 family.

This Rhizobium meliloti (strain 1021) (Ensifer meliloti) protein is UPF0178 protein R01393.